The chain runs to 484 residues: Falcipain-2a (484 aa).

The Cytoplasmic portion of the chain corresponds to 1–35 (MDYNMDYAPHEVISQQGERFVDKYVDRKILKNKKS). A propeptide spans 1 to 243 (MDYNMDYAPH…PLKNSKYLLD (243 aa)) (activation peptide). Positions 16–25 (QGERFVDKYV) match the Bipartite vacuolar targeting signal 1 motif. Residues 36–56 (LLVIISLSVLSVVGFVLFYFT) form a helical; Signal-anchor for type II membrane protein membrane-spanning segment. The Lumenal portion of the chain corresponds to 57 to 484 (PNSRKSDLFK…GTDAFIPLIE (428 aa)). An N-linked (GlcNAc...) asparagine glycan is attached at asparagine 67. Residues 84 to 105 (KSPNGKKFIVSKIDEALSFYDS) carry the Bipartite vacuolar targeting signal 2 motif. Residues 244–260 (QMNYEEVIKKYKGNENF) carry the Nose motif; required for the correct folding of the mature form motif. Disulfide bonds link cysteine 282/cysteine 323, cysteine 316/cysteine 357, cysteine 342/cysteine 362, and cysteine 411/cysteine 472. Residue cysteine 285 is part of the active site. Histidine 417 is a catalytic residue. Residues 428-437 (EIVNPLTKKG) carry the Arm motif; binds to host hemoglobin and required for the inhibitory interaction between the propeptide and the catalytic domain motif. Asparagine 447 is a catalytic residue.

The protein belongs to the peptidase C1 family. Component of the hemozoin formation complex (HFC) composed of falcipains FP2A and/or FP2B, plasmepsins PMII, PMIII/HAP and PMIV, heme detoxifying protein HDP and falcilysin FLN. The HFC complex is involved in hemoglobin degradation and detoxification of heme in the food vacuole during the asexual blood stage. In terms of processing, auto-cleaved to remove the propeptide.

The protein localises to the vacuole. Its subcellular location is the membrane. Its activity is regulated as follows. Inhibited by cysteine protease inhibitor ICP. Inhibited by heme and heme analogs. Cysteine protease which cleaves native host hemoglobin and globin in the food vacuole during the asexual blood stage. The binding to host hemoglobin is pH-sensitive and only occurs at acidic pH. Cleaves ankyrin and protein 4.1, two components of host erythrocyte membrane cytoskeleton required for the stability of the erythrocyte membrane, and thus may be involved in parasite release. Preferentially cleaves substrates which have an arginine or lysine at the P1 position and a leucine or phenylalanine at the P2 position. The protein is Falcipain-2a of Plasmodium falciparum (isolate 3D7).